A 229-amino-acid chain; its full sequence is MKKLVFGLLAIVLFGCGLYIYHVWFGDPFSKNAAEQKLVSYVKQTYPKKEIKITNGVYNAKTSEYVFEATSQSHRYPMCTKGFLHPKVTCDGIEEAYTESVAKHVNEEATKAIEADLKKAVPRFIKADAALSIENGQFTLDTKWNKKLAEKAPMSMTIQLDASGLSKTDAAKMAETVRKTLNEKGYTYSNGTIDCMQKDGDGGIGYVKYSIDFLSKAAIQSNDAEELGS.

This is an uncharacterized protein from Bacillus subtilis (strain 168).